The following is a 406-amino-acid chain: Probable 2,3-bisphosphoglycerate-independent phosphoglycerate mutase (406 aa).

The protein belongs to the BPG-independent phosphoglycerate mutase family. A-PGAM subfamily.

It carries out the reaction (2R)-2-phosphoglycerate = (2R)-3-phosphoglycerate. Its pathway is carbohydrate degradation; glycolysis; pyruvate from D-glyceraldehyde 3-phosphate: step 3/5. Catalyzes the interconversion of 2-phosphoglycerate and 3-phosphoglycerate. This is Probable 2,3-bisphosphoglycerate-independent phosphoglycerate mutase from Thermus thermophilus (strain ATCC BAA-163 / DSM 7039 / HB27).